The primary structure comprises 496 residues: MFS transporter cpaT (496 aa).

A disordered region spans residues 1-45; that stretch reads MGHQEEPPRICKTPSGHEQGEGPAEKTSKPSTEEVGWDGPTDPAR. Residues 18–32 are compositionally biased toward basic and acidic residues; sequence EQGEGPAEKTSKPST. Asn-48 carries N-linked (GlcNAc...) asparagine glycosylation. A helical membrane pass occupies residues 58-78; the sequence is MGIISYLTFLTPLTSSIVAPA. An N-linked (GlcNAc...) asparagine glycan is attached at Asn-90. The next 5 helical transmembrane spans lie at 93–113, 130–150, 154–174, 180–200, and 212–232; these read LASF…LFLA, FIFT…ALLV, FAGI…ADMF, GVAM…GPIA, and WVFW…LFVL. An N-linked (GlcNAc...) asparagine glycan is attached at Asn-252. Transmembrane regions (helical) follow at residues 288 to 308, 325 to 345, 367 to 387, 395 to 415, 427 to 449, and 463 to 483; these read VALF…LFTT, GLVY…FGAL, LPPL…YGWS, IMPI…LLPI, AASA…PLAG, and SLLG…YFYG.

Belongs to the major facilitator superfamily.

Its subcellular location is the membrane. Functionally, MFS transporter; part of the gene cluster that mediates the biosynthesis of the fungal neurotoxin cyclopiazonic acid (CPA), a nanomolar inhibitor of Ca(2+)-ATPase with a unique pentacyclic indole tetramic acid scaffold. The protein is MFS transporter cpaT of Aspergillus oryzae (Yellow koji mold).